A 408-amino-acid chain; its full sequence is S-adenosylmethionine synthase (408 aa).

140–145 (GQGSVD) contacts ATP.

This sequence belongs to the AdoMet synthase 2 family. Requires Mg(2+) as cofactor.

The catalysed reaction is L-methionine + ATP + H2O = S-adenosyl-L-methionine + phosphate + diphosphate. The protein operates within amino-acid biosynthesis; S-adenosyl-L-methionine biosynthesis; S-adenosyl-L-methionine from L-methionine: step 1/1. Catalyzes the formation of S-adenosylmethionine from methionine and ATP. The chain is S-adenosylmethionine synthase from Caldivirga maquilingensis (strain ATCC 700844 / DSM 13496 / JCM 10307 / IC-167).